A 409-amino-acid chain; its full sequence is Serine/threonine transporter SstT (409 aa).

9 consecutive transmembrane segments (helical) span residues 24 to 44 (LALG…AGLF), 48 to 68 (FVGA…AATI), 82 to 102 (IIVL…IAGM), 142 to 162 (AIAN…GAAL), 194 to 214 (LGIF…ALAG), 218 to 238 (LLAV…PAIV), 292 to 312 (IPLG…VLAM), 319 to 339 (GIQV…VSAC), and 365 to 385 (VAMQ…SAET).

This sequence belongs to the dicarboxylate/amino acid:cation symporter (DAACS) (TC 2.A.23) family.

It is found in the cell inner membrane. The catalysed reaction is L-serine(in) + Na(+)(in) = L-serine(out) + Na(+)(out). It catalyses the reaction L-threonine(in) + Na(+)(in) = L-threonine(out) + Na(+)(out). Functionally, involved in the import of serine and threonine into the cell, with the concomitant import of sodium (symport system). This is Serine/threonine transporter SstT from Neisseria gonorrhoeae (strain NCCP11945).